Here is an 85-residue protein sequence, read N- to C-terminus: UPF0410 protein YdaS (85 aa).

Transmembrane regions (helical) follow at residues 2–22, 28–48, and 58–78; these read LSFLVSLVVAIVIGLIGSAIV, GGIFGSMIAGLIGAWIGHGLL, and FAIFPAIIGAAIFVFLLGLIF.

It belongs to the UPF0410 family.

Its subcellular location is the cell membrane. This chain is UPF0410 protein YdaS (ydaS), found in Bacillus subtilis (strain 168).